The following is a 240-amino-acid chain: Ribonuclease 3 (240 aa).

An RNase III domain is found at 13–143 (DHASLLEALG…LLGAVHLQHG (131 aa)). Glu-53 serves as a coordination point for Mg(2+). Residue Asp-57 is part of the active site. Mg(2+) contacts are provided by Asp-129 and Glu-132. Glu-132 is an active-site residue. Residues 170-238 (DWKTSLQELT…AGAAYQALTA (69 aa)) enclose the DRBM domain.

It belongs to the ribonuclease III family. In terms of assembly, homodimer. The cofactor is Mg(2+).

The protein resides in the cytoplasm. The catalysed reaction is Endonucleolytic cleavage to 5'-phosphomonoester.. Digests double-stranded RNA. Involved in the processing of primary rRNA transcript to yield the immediate precursors to the large and small rRNAs (23S and 16S). Processes some mRNAs, and tRNAs when they are encoded in the rRNA operon. Processes pre-crRNA and tracrRNA of type II CRISPR loci if present in the organism. This is Ribonuclease 3 from Nocardia farcinica (strain IFM 10152).